The following is a 1891-amino-acid chain: Protein TIC 214 (1891 aa).

Transmembrane regions (helical) follow at residues 18-38, 64-84, 87-107, 124-144, 172-192, and 221-241; these read IINS…FSIG, FITG…HLAL, PHTI…WNNH, LSIQ…HFIL, VGWL…LVWI, and IFSI…PSPI. Disordered regions lie at residues 248–300, 788–807, and 1580–1607; these read EASK…EGWD, EEQT…DNKR, and KNRS…NLSP. Over residues 256 to 268 the composition is skewed to acidic residues; it reads VESEEERDVEIET. Residues 1582-1601 show a composition bias toward basic and acidic residues; sequence RSQEAKEPPSQRERGSDIEN.

Belongs to the TIC214 family. Part of the Tic complex.

It localises to the plastid. Its subcellular location is the chloroplast inner membrane. In terms of biological role, involved in protein precursor import into chloroplasts. May be part of an intermediate translocation complex acting as a protein-conducting channel at the inner envelope. The sequence is that of Protein TIC 214 from Solanum lycopersicum (Tomato).